The following is a 262-amino-acid chain: Dimeric xanthone biosynthesis cluster protein R11 (262 aa).

Residues 69–160 (IADLLFYTKT…PQLFKHLNDE (92 aa)) are hemerythrin-like.

The protein operates within secondary metabolite biosynthesis. Functionally, part of the gene cluster that mediates the biosynthesis of the dimeric xanthones cryptosporioptides. The pathway begins with the synthesis of atrochrysone thioester by the polyketide synthase dmx-nrPKS. The atrochrysone carboxyl ACP thioesterase dmxR1 then breaks the thioester bond and releases the atrochrysone carboxylic acid from dmx-nrPKS. Atrochrysone carboxylic acid is decarboxylated by the decarboxylase dmxR15, and oxidized by the anthrone oxygenase dmxR16 to yield emodin. Emodin is then reduced to emodin hydroquinone by the oxidoreductase dmxR7. A-ring reduction by the short chain dehydrogenase dmxR18, dehydration by the scytalone dehydratase-like protein dmxR17 and probable spontaneous re-oxidation, results in overall deoxygenation to chrysophanol. Baeyer-Villiger oxidation by the Baeyer-Villiger monooxygenase (BVMO) dmxR6 then yields monodictylactone in equilibrium with monodictyphenone. In the case of the cryptosporioptides biosynthesis, monodictylactone is reduced at C-12 to an alcohol (by the short chain dehydrogenases dmxR12 or dmxR8) and hydroxylated at C-5 by dmxR9, yielding the electron-rich aromatic which could eliminate H(2)O to form the ortho-quinonemethide, followed by tautomerisation to paraquinone and complete the formal reduction to produce the 10-methylgroup. Conjugate addition of C-4a-OH to the resulting paraquinone by the monooxygenase dmxR10 then gives cyclohexadienone, which is then reduced at C-5 by the short chain dehydrogenase dmxR3 to give the dihydroxanthone. The 6,7-epoxide in the cryptosporioptides could be introduced by the cytochrome P450 monooxygenase dmxL3. The highly reducing PKS dmxL2 manufactures butyrate, which is further carboxylated by dmxL1 to form ethylmalonate. It is not yet clear whether the carboxylation occurs while the butyrate is attached to the ACP of dmxL2, but this unusual fungal metabolite could then be esterified to O-5 by the O-acetyltransferase dmxR13. Finally, dimerization performed by dmxR5 gives the observed dimers cryptosporioptides A, B and C as the final products of the pathway. This Cryptosporiopsis sp. (strain 8999) protein is Dimeric xanthone biosynthesis cluster protein R11.